A 150-amino-acid polypeptide reads, in one-letter code: Dynein light chain Tctex-type protein 2B (150 aa).

It belongs to the dynein light chain Tctex-type family.

The protein localises to the dynein axonemal particle. In terms of biological role, acts as one of several non-catalytic accessory components of the cytoplasmic dynein 2 complex (dynein-2 complex), a motor protein complex that drives the movement of cargos along microtubules within cilia and flagella in concert with the intraflagellar transport (IFT) system. Required for proper retrograde ciliary transport. The sequence is that of Dynein light chain Tctex-type protein 2B (dynlt2b) from Danio rerio (Zebrafish).